A 218-amino-acid chain; its full sequence is Ribosomal RNA small subunit methyltransferase J (218 aa).

Residues 55 to 56, 71 to 72, and D123 each bind S-adenosyl-L-methionine; these read RD and ER.

Belongs to the methyltransferase superfamily. RsmJ family.

The protein resides in the cytoplasm. It carries out the reaction guanosine(1516) in 16S rRNA + S-adenosyl-L-methionine = N(2)-methylguanosine(1516) in 16S rRNA + S-adenosyl-L-homocysteine + H(+). Specifically methylates the guanosine in position 1516 of 16S rRNA. The polypeptide is Ribosomal RNA small subunit methyltransferase J (Rhodopseudomonas palustris (strain HaA2)).